Consider the following 314-residue polypeptide: Beta-lactamase (314 aa).

The segment at residues 1-39 (MHPSTSRPSRRTLLTATAGAALAAATLVPGTAHASSGGR) is a signal peptide (tat-type signal). Positions 31-50 (TAHASSGGRGHGSGSVSDAE) are disordered. Ser-89 serves as the catalytic Acyl-ester intermediate. Residue 259–261 (KTG) coordinates substrate.

The protein belongs to the class-A beta-lactamase family. Post-translationally, predicted to be exported by the Tat system. The position of the signal peptide cleavage has been experimentally proven.

It carries out the reaction a beta-lactam + H2O = a substituted beta-amino acid. The protein is Beta-lactamase of Streptomyces albus G.